A 463-amino-acid chain; its full sequence is L-seryl-tRNA(Sec) selenium transferase (463 aa).

An N6-(pyridoxal phosphate)lysine modification is found at Lys-295.

It belongs to the SelA family. As to quaternary structure, homodecamer; pentamer of dimers. Binds only one seryl-tRNA(Sec) per dimer. The cofactor is pyridoxal 5'-phosphate.

It localises to the cytoplasm. It carries out the reaction L-seryl-tRNA(Sec) + selenophosphate + H(+) = L-selenocysteinyl-tRNA(Sec) + phosphate. It functions in the pathway aminoacyl-tRNA biosynthesis; selenocysteinyl-tRNA(Sec) biosynthesis; selenocysteinyl-tRNA(Sec) from L-seryl-tRNA(Sec) (bacterial route): step 1/1. Functionally, converts seryl-tRNA(Sec) to selenocysteinyl-tRNA(Sec) required for selenoprotein biosynthesis. In Escherichia coli (strain K12 / MC4100 / BW2952), this protein is L-seryl-tRNA(Sec) selenium transferase.